A 2004-amino-acid polypeptide reads, in one-letter code: Immunoglobulin A1 protease (2004 aa).

Positions 1–42 (MEKYFGEKQERFSFRKLSVGLVSATISSLFFMSVLASSSVDA) are cleaved as a signal peptide. Residues 43–99 (QETAGVHYKYVADSELSSEEKKQLVYDIPTYVENDDETYYLVYKLNSQNQLAELPNT) constitute a propeptide that is removed on maturation. The LPXTG sorting signal motif lies at 96–100 (LPNTG). A Pentaglycyl murein peptidoglycan amidated threonine modification is found at T99. A run of 2 helical transmembrane segments spans residues 106 to 125 (QALV…FAVS) and 132 to 154 (KTVL…VHAL). Residues 155–2004 (ENHLLLNYNT…FRSSIFENKK (1850 aa)) are Extracellular-facing. Disordered regions lie at residues 194–213 (TTSE…PTKQ), 235–305 (QEQT…NPQD), 373–394 (EIVS…TKKT), and 422–720 (PELP…PEKT). Composition is skewed to polar residues over residues 197-213 (ESEV…PTKQ) and 235-246 (QEQTPVSSTKPT). Residues 276-296 (LAEHKNLETKKEEKISPKEKT) are compositionally biased toward basic and acidic residues. The region spanning 314 to 393 (KPELLYREET…PRIVEKGTKK (80 aa)) is the G5 domain. 3 repeat units span residues 419–435 (AIQP…KGEP), 436–452 (EVQP…KGET), and 453–469 (EVQP…KGEP). Residues 419-469 (AIQPELPEAVVSDKGEPEVQPTLPEAVVTDKGETEVQPESPDTVVSDKGEP) form a 3 X 17 AA approximate tandem repeats region. Residues 485 to 511 (VKPETPVEKTKEQGPEKTEEVPVKPTE) show a composition bias toward basic and acidic residues. Polar residues-rich tracts occupy residues 516-529 (NPNE…SIQE) and 538-572 (EEST…SVGE). Positions 574–591 (NKPEHNDSKNENSEKTVE) are enriched in basic and acidic residues. 2 stretches are compositionally biased toward polar residues: residues 618-639 (EETQ…SNKP) and 648-681 (ESNQ…PSNG). Positions 682-699 (NSTEDVSTESNTSNSNGN) are enriched in low complexity. A compositionally biased stretch (basic and acidic residues) spans 700 to 720 (EEIKQENELDPDKKVEEPEKT). H1645 provides a ligand contact to Zn(2+). E1646 is a catalytic residue. Zn(2+) contacts are provided by H1649 and E1669.

It belongs to the peptidase M26 family. Zn(2+) is required as a cofactor. The Gram-positive cell-wall anchor motif LPXTG is located in the N-terminal part, in contrast to such motifs in other known streptococcal and staphylococcal proteins. The protease could be cleaved by the sortase and anchored in the membrane via the two potential N-terminal transmembrane domains, whereas the propeptide located prior to the LPXTG motif would remain attached to the cell wall peptidoglycan by an amide bond.

The protein localises to the secreted. It is found in the cell wall. It localises to the membrane. The enzyme catalyses Cleavage of Pro-|-Thr bond in the hinge region of the heavy chain of human IgA.. Its function is as follows. Zinc metalloproteinase which cleaves human immunoglobulin A1 (IgA1) in the hinge region, rendering it less efficient in coating the surface of colonizing or invading pneumococci. Strongly contributes to virulence in mice. May be responsible for pneumococcal infection and is potentially involved in distinct stages of pneumococcal disease. In Streptococcus pneumoniae serotype 4 (strain ATCC BAA-334 / TIGR4), this protein is Immunoglobulin A1 protease (iga).